Consider the following 258-residue polypeptide: Regulatory protein RecX (258 aa).

Belongs to the RecX family.

The protein resides in the cytoplasm. Functionally, modulates RecA activity. This chain is Regulatory protein RecX, found in Streptococcus thermophilus (strain CNRZ 1066).